The following is a 599-amino-acid chain: Elongation factor 4 (599 aa).

Residues 5–187 (SHIRNFSIIA…ELVRLVPPPT (183 aa)) enclose the tr-type G domain. GTP-binding positions include 17 to 22 (DHGKST) and 134 to 137 (NKMD).

This sequence belongs to the TRAFAC class translation factor GTPase superfamily. Classic translation factor GTPase family. LepA subfamily.

The protein resides in the cell inner membrane. It carries out the reaction GTP + H2O = GDP + phosphate + H(+). In terms of biological role, required for accurate and efficient protein synthesis under certain stress conditions. May act as a fidelity factor of the translation reaction, by catalyzing a one-codon backward translocation of tRNAs on improperly translocated ribosomes. Back-translocation proceeds from a post-translocation (POST) complex to a pre-translocation (PRE) complex, thus giving elongation factor G a second chance to translocate the tRNAs correctly. Binds to ribosomes in a GTP-dependent manner. This is Elongation factor 4 from Cellvibrio japonicus (strain Ueda107) (Pseudomonas fluorescens subsp. cellulosa).